We begin with the raw amino-acid sequence, 332 residues long: 4-hydroxy-3-methylbut-2-enyl diphosphate reductase (332 aa).

Cys13 is a [4Fe-4S] cluster binding site. Residues His41 and His75 each contribute to the (2E)-4-hydroxy-3-methylbut-2-enyl diphosphate site. His41 and His75 together coordinate dimethylallyl diphosphate. The isopentenyl diphosphate site is built by His41 and His75. Cys97 contributes to the [4Fe-4S] cluster binding site. A (2E)-4-hydroxy-3-methylbut-2-enyl diphosphate-binding site is contributed by His125. His125 lines the dimethylallyl diphosphate pocket. Residue His125 participates in isopentenyl diphosphate binding. Glu127 (proton donor) is an active-site residue. Position 168 (Thr168) interacts with (2E)-4-hydroxy-3-methylbut-2-enyl diphosphate. Cys229 is a [4Fe-4S] cluster binding site. (2E)-4-hydroxy-3-methylbut-2-enyl diphosphate is bound by residues Ser257, Ser258, Asn259, and Ser306. Ser257, Ser258, Asn259, and Ser306 together coordinate dimethylallyl diphosphate. 4 residues coordinate isopentenyl diphosphate: Ser257, Ser258, Asn259, and Ser306.

It belongs to the IspH family. Requires [4Fe-4S] cluster as cofactor.

The catalysed reaction is isopentenyl diphosphate + 2 oxidized [2Fe-2S]-[ferredoxin] + H2O = (2E)-4-hydroxy-3-methylbut-2-enyl diphosphate + 2 reduced [2Fe-2S]-[ferredoxin] + 2 H(+). It catalyses the reaction dimethylallyl diphosphate + 2 oxidized [2Fe-2S]-[ferredoxin] + H2O = (2E)-4-hydroxy-3-methylbut-2-enyl diphosphate + 2 reduced [2Fe-2S]-[ferredoxin] + 2 H(+). The protein operates within isoprenoid biosynthesis; dimethylallyl diphosphate biosynthesis; dimethylallyl diphosphate from (2E)-4-hydroxy-3-methylbutenyl diphosphate: step 1/1. It functions in the pathway isoprenoid biosynthesis; isopentenyl diphosphate biosynthesis via DXP pathway; isopentenyl diphosphate from 1-deoxy-D-xylulose 5-phosphate: step 6/6. Catalyzes the conversion of 1-hydroxy-2-methyl-2-(E)-butenyl 4-diphosphate (HMBPP) into a mixture of isopentenyl diphosphate (IPP) and dimethylallyl diphosphate (DMAPP). Acts in the terminal step of the DOXP/MEP pathway for isoprenoid precursor biosynthesis. The chain is 4-hydroxy-3-methylbut-2-enyl diphosphate reductase from Chlorobaculum parvum (strain DSM 263 / NCIMB 8327) (Chlorobium vibrioforme subsp. thiosulfatophilum).